The chain runs to 424 residues: UDP-N-acetylglucosamine 1-carboxyvinyltransferase (424 aa).

Position 22-23 (22-23) interacts with phosphoenolpyruvate; that stretch reads KN. R96 is a binding site for UDP-N-acetyl-alpha-D-glucosamine. C120 serves as the catalytic Proton donor. At C120 the chain carries 2-(S-cysteinyl)pyruvic acid O-phosphothioketal. Residues 125–129, D312, and I334 each bind UDP-N-acetyl-alpha-D-glucosamine; that span reads RPVDQ.

The protein belongs to the EPSP synthase family. MurA subfamily.

The protein localises to the cytoplasm. The enzyme catalyses phosphoenolpyruvate + UDP-N-acetyl-alpha-D-glucosamine = UDP-N-acetyl-3-O-(1-carboxyvinyl)-alpha-D-glucosamine + phosphate. It functions in the pathway cell wall biogenesis; peptidoglycan biosynthesis. In terms of biological role, cell wall formation. Adds enolpyruvyl to UDP-N-acetylglucosamine. This Polynucleobacter asymbioticus (strain DSM 18221 / CIP 109841 / QLW-P1DMWA-1) (Polynucleobacter necessarius subsp. asymbioticus) protein is UDP-N-acetylglucosamine 1-carboxyvinyltransferase.